The sequence spans 142 residues: Hemoglobin subunit alpha-2 (142 aa).

One can recognise a Globin domain in the interval 2 to 142; it reads VLSPADKTNV…VSTVLTSKYR (141 aa). His59 serves as a coordination point for O2. Residue His88 participates in heme b binding.

The protein belongs to the globin family. As to quaternary structure, heterotetramer of two alpha chains and two beta chains. In terms of tissue distribution, red blood cells.

Involved in oxygen transport from the lung to the various peripheral tissues. This Arctocephalus galapagoensis (Galapagoes fur seal) protein is Hemoglobin subunit alpha-2.